The primary structure comprises 383 residues: Heme chaperone HemW (383 aa).

In terms of domain architecture, Radical SAM core spans Met-1 to Glu-241. Tyr-10 is an S-adenosyl-L-methionine binding site. Residues Cys-16, Cys-20, and Cys-23 each coordinate [4Fe-4S] cluster. Residues Gly-70, Gly-71–Thr-72, Glu-103, Gln-130, Arg-142, and Asp-167 contribute to the S-adenosyl-L-methionine site.

It belongs to the anaerobic coproporphyrinogen-III oxidase family. HemW subfamily. It depends on [4Fe-4S] cluster as a cofactor.

The protein resides in the cytoplasm. Functionally, probably acts as a heme chaperone, transferring heme to an unknown acceptor. Binds one molecule of heme per monomer, possibly covalently. Binds 1 [4Fe-4S] cluster. The cluster is coordinated with 3 cysteines and an exchangeable S-adenosyl-L-methionine. The protein is Heme chaperone HemW of Haemophilus influenzae (strain ATCC 51907 / DSM 11121 / KW20 / Rd).